Consider the following 383-residue polypeptide: Trichodiene synthase (383 aa).

The protein belongs to the trichodiene synthase family.

It catalyses the reaction (2E,6E)-farnesyl diphosphate = trichodiene + diphosphate. Its pathway is sesquiterpene biosynthesis; trichothecene biosynthesis. TS is a member of the terpene cyclase group of enzymes. It catalyzes the isomerization and cyclization of farnesyl pyro-phosphate to form trichodiene, the first cyclic intermediate in the biosynthetic pathway for trichothecenes. It serves to branch trichothecene biosynthesis from the isoprenoid pathway. The sequence is that of Trichodiene synthase (TRI5) from Stachybotrys chartarum (Toxic black mold).